The sequence spans 590 residues: Aspartate--tRNA(Asp/Asn) ligase (590 aa).

Residue Glu175 coordinates L-aspartate. The segment at 199–202 is aspartate; sequence QQYK. Residues Arg221 and His450 each contribute to the L-aspartate site. An ATP-binding site is contributed by 221–223; the sequence is RDE. ATP is bound at residue Glu484. Arg491 serves as a coordination point for L-aspartate. Residue 536–539 participates in ATP binding; the sequence is GVDR.

The protein belongs to the class-II aminoacyl-tRNA synthetase family. Type 1 subfamily. In terms of assembly, homodimer.

The protein resides in the cytoplasm. The enzyme catalyses tRNA(Asx) + L-aspartate + ATP = L-aspartyl-tRNA(Asx) + AMP + diphosphate. Its function is as follows. Aspartyl-tRNA synthetase with relaxed tRNA specificity since it is able to aspartylate not only its cognate tRNA(Asp) but also tRNA(Asn). Reaction proceeds in two steps: L-aspartate is first activated by ATP to form Asp-AMP and then transferred to the acceptor end of tRNA(Asp/Asn). The sequence is that of Aspartate--tRNA(Asp/Asn) ligase from Rhodopseudomonas palustris (strain HaA2).